A 134-amino-acid polypeptide reads, in one-letter code: Small ribosomal subunit protein uS8c (134 aa).

The protein belongs to the universal ribosomal protein uS8 family. Part of the 30S ribosomal subunit.

It localises to the plastid. The protein resides in the chloroplast. Functionally, one of the primary rRNA binding proteins, it binds directly to 16S rRNA central domain where it helps coordinate assembly of the platform of the 30S subunit. The chain is Small ribosomal subunit protein uS8c (rps8) from Bigelowiella natans (Pedinomonas minutissima).